The chain runs to 334 residues: tRNA N6-adenosine threonylcarbamoyltransferase (334 aa).

Fe cation is bound by residues His-112 and His-116. Substrate-binding positions include 135–139 (VVSGG), Asp-168, Gly-181, Asp-185, and Asn-274. A Fe cation-binding site is contributed by Asp-303.

This sequence belongs to the KAE1 / TsaD family. Requires Fe(2+) as cofactor.

It is found in the cytoplasm. It carries out the reaction L-threonylcarbamoyladenylate + adenosine(37) in tRNA = N(6)-L-threonylcarbamoyladenosine(37) in tRNA + AMP + H(+). Functionally, required for the formation of a threonylcarbamoyl group on adenosine at position 37 (t(6)A37) in tRNAs that read codons beginning with adenine. Is involved in the transfer of the threonylcarbamoyl moiety of threonylcarbamoyl-AMP (TC-AMP) to the N6 group of A37, together with TsaE and TsaB. TsaD likely plays a direct catalytic role in this reaction. In Anaeromyxobacter dehalogenans (strain 2CP-1 / ATCC BAA-258), this protein is tRNA N6-adenosine threonylcarbamoyltransferase.